Here is a 391-residue protein sequence, read N- to C-terminus: Succinate--CoA ligase [ADP-forming] subunit beta (391 aa).

An ATP-grasp domain is found at 9 to 245; sequence KQIFAEYGVP…LSEEDPDEVE (237 aa). Residues Lys46, 53-55, Glu99, Ala102, and Glu107 contribute to the ATP site; that span reads GRG. Mg(2+)-binding residues include Asn200 and Asp214. Substrate is bound by residues Asn265 and 322–324; that span reads GIV.

This sequence belongs to the succinate/malate CoA ligase beta subunit family. As to quaternary structure, heterotetramer of two alpha and two beta subunits. Mg(2+) is required as a cofactor.

The enzyme catalyses succinate + ATP + CoA = succinyl-CoA + ADP + phosphate. The catalysed reaction is GTP + succinate + CoA = succinyl-CoA + GDP + phosphate. It functions in the pathway carbohydrate metabolism; tricarboxylic acid cycle; succinate from succinyl-CoA (ligase route): step 1/1. Its function is as follows. Succinyl-CoA synthetase functions in the citric acid cycle (TCA), coupling the hydrolysis of succinyl-CoA to the synthesis of either ATP or GTP and thus represents the only step of substrate-level phosphorylation in the TCA. The beta subunit provides nucleotide specificity of the enzyme and binds the substrate succinate, while the binding sites for coenzyme A and phosphate are found in the alpha subunit. In Sulfurovum sp. (strain NBC37-1), this protein is Succinate--CoA ligase [ADP-forming] subunit beta.